The sequence spans 65 residues: Small ribosomal subunit protein bS21 (65 aa).

Belongs to the bacterial ribosomal protein bS21 family.

The sequence is that of Small ribosomal subunit protein bS21 from Chlorobaculum parvum (strain DSM 263 / NCIMB 8327) (Chlorobium vibrioforme subsp. thiosulfatophilum).